Reading from the N-terminus, the 217-residue chain is Adenylate kinase (217 aa).

Position 10–15 (10–15 (GAGKGT)) interacts with ATP. The segment at 30 to 59 (STGDMLRAAVKAGTEMGLAAKKVMDAGGLV) is NMP. Residues threonine 31, arginine 36, 57–59 (GLV), 85–88 (GFPR), and glutamine 92 contribute to the AMP site. Positions 122-159 (GRRSHPASGRTYHVKFNPPKVDGVDDVTGEPLVQRDDD) are LID. ATP is bound by residues arginine 123 and 132 to 133 (TY). AMP-binding residues include arginine 156 and arginine 167. Glycine 203 is an ATP binding site.

Belongs to the adenylate kinase family. In terms of assembly, monomer.

It is found in the cytoplasm. It catalyses the reaction AMP + ATP = 2 ADP. It participates in purine metabolism; AMP biosynthesis via salvage pathway; AMP from ADP: step 1/1. Functionally, catalyzes the reversible transfer of the terminal phosphate group between ATP and AMP. Plays an important role in cellular energy homeostasis and in adenine nucleotide metabolism. This chain is Adenylate kinase, found in Leptothrix cholodnii (strain ATCC 51168 / LMG 8142 / SP-6) (Leptothrix discophora (strain SP-6)).